A 107-amino-acid polypeptide reads, in one-letter code: Holo-[acyl-carrier-protein] synthase (107 aa).

The Mg(2+) site is built by aspartate 10 and glutamate 54.

This sequence belongs to the P-Pant transferase superfamily. AcpS family. It depends on Mg(2+) as a cofactor.

Its subcellular location is the cytoplasm. It carries out the reaction apo-[ACP] + CoA = holo-[ACP] + adenosine 3',5'-bisphosphate + H(+). Its function is as follows. Transfers the 4'-phosphopantetheine moiety from coenzyme A to a Ser of acyl-carrier-protein. The chain is Holo-[acyl-carrier-protein] synthase from Mycoplasma mobile (strain ATCC 43663 / 163K / NCTC 11711) (Mesomycoplasma mobile).